The primary structure comprises 467 residues: tRNA-2-methylthio-N(6)-dimethylallyladenosine synthase (467 aa).

In terms of domain architecture, MTTase N-terminal spans 15–135 (KKIFVKTYGC…LPEYVARLAN (121 aa)). Cysteine 24, cysteine 60, cysteine 98, cysteine 177, cysteine 181, and cysteine 184 together coordinate [4Fe-4S] cluster. The Radical SAM core domain occupies 163-395 (LARGATAFLT…QALLGEQQLA (233 aa)). The TRAM domain occupies 398–461 (AGCAGRTMPV…RNSLRGRLRE (64 aa)).

The protein belongs to the methylthiotransferase family. MiaB subfamily. As to quaternary structure, monomer. It depends on [4Fe-4S] cluster as a cofactor.

It localises to the cytoplasm. It carries out the reaction N(6)-dimethylallyladenosine(37) in tRNA + (sulfur carrier)-SH + AH2 + 2 S-adenosyl-L-methionine = 2-methylsulfanyl-N(6)-dimethylallyladenosine(37) in tRNA + (sulfur carrier)-H + 5'-deoxyadenosine + L-methionine + A + S-adenosyl-L-homocysteine + 2 H(+). Its function is as follows. Catalyzes the methylthiolation of N6-(dimethylallyl)adenosine (i(6)A), leading to the formation of 2-methylthio-N6-(dimethylallyl)adenosine (ms(2)i(6)A) at position 37 in tRNAs that read codons beginning with uridine. This Parvibaculum lavamentivorans (strain DS-1 / DSM 13023 / NCIMB 13966) protein is tRNA-2-methylthio-N(6)-dimethylallyladenosine synthase.